The primary structure comprises 499 residues: Maturase K (499 aa).

Belongs to the intron maturase 2 family. MatK subfamily.

It is found in the plastid. The protein localises to the chloroplast. In terms of biological role, usually encoded in the trnK tRNA gene intron. Probably assists in splicing its own and other chloroplast group II introns. The polypeptide is Maturase K (Gymnocladus dioicus (Kentucky coffee tree)).